The chain runs to 872 residues: C-mannosyltransferase dpy-19 homolog (872 aa).

Transmembrane regions (helical) follow at residues 4 to 24 (PNLY…FLYV), 126 to 146 (FVWL…TLLS), 149 to 169 (IFGG…VAKI), 179 to 199 (FAFP…GRII), 211 to 231 (IFAM…STFI), 257 to 277 (VLDY…MSHG), 279 to 299 (SQLL…ITMV), 326 to 346 (FLML…ELFN), and 399 to 419 (VKTM…AMFF). Residues 508 to 535 (KRLRAQINRNSVKQRKERAQETKEAATD) are a coiled coil. Positions 514–620 (INRNSVKQRK…RSSSRRSSVV (107 aa)) are disordered. Positions 524 to 533 (ERAQETKEAA) are enriched in basic and acidic residues. Residues 541–551 (TEEEDKDPEAE) are compositionally biased toward acidic residues. Transmembrane regions (helical) follow at residues 627–647 (ILNM…LIGL) and 678–698 (NIFW…PGMV).

It belongs to the dpy-19 family.

The protein localises to the membrane. In terms of biological role, probable C-mannosyltransferase that mediates C-mannosylation of tryptophan residues on target proteins. This chain is C-mannosyltransferase dpy-19 homolog, found in Drosophila melanogaster (Fruit fly).